The chain runs to 187 residues: Putative gamma-glutamylcyclotransferase At3g02910 (187 aa).

17–20 (YGTL) contributes to the substrate binding site. E92 functions as the Proton acceptor in the catalytic mechanism.

Belongs to the gamma-glutamylcyclotransferase family.

In terms of biological role, putative gamma-glutamylcyclotransferase. This is Putative gamma-glutamylcyclotransferase At3g02910 from Arabidopsis thaliana (Mouse-ear cress).